A 199-amino-acid polypeptide reads, in one-letter code: N-(5'-phosphoribosyl)anthranilate isomerase (199 aa).

Belongs to the TrpF family.

It catalyses the reaction N-(5-phospho-beta-D-ribosyl)anthranilate = 1-(2-carboxyphenylamino)-1-deoxy-D-ribulose 5-phosphate. Its pathway is amino-acid biosynthesis; L-tryptophan biosynthesis; L-tryptophan from chorismate: step 3/5. The sequence is that of N-(5'-phosphoribosyl)anthranilate isomerase from Streptococcus pneumoniae serotype 4 (strain ATCC BAA-334 / TIGR4).